The primary structure comprises 453 residues: Chromosomal replication initiator protein DnaA (453 aa).

The interval 1–71 is domain I, interacts with DnaA modulators; that stretch reads MSEKEIWEKV…QAILFDVVGY (71 aa). The segment at 71–114 is domain II; sequence YEVKPHFITTEELANYSNNETATPKEATKPSTETTEDNHVLGRE. Residues 115 to 331 form a domain III, AAA+ region region; it reads QFNAHNTFDT…GALTRLLAYS (217 aa). Positions 159, 161, 162, and 163 each coordinate ATP. Residues 332–453 are domain IV, binds dsDNA; that stretch reads QLLGKPITTE…ENLEKEIRNV (122 aa).

Belongs to the DnaA family. As to quaternary structure, oligomerizes as a right-handed, spiral filament on DNA at oriC.

It localises to the cytoplasm. Plays an essential role in the initiation and regulation of chromosomal replication. ATP-DnaA binds to the origin of replication (oriC) to initiate formation of the DNA replication initiation complex once per cell cycle. Binds the DnaA box (a 9 base pair repeat at the origin) and separates the double-stranded (ds)DNA. Forms a right-handed helical filament on oriC DNA; dsDNA binds to the exterior of the filament while single-stranded (ss)DNA is stabiized in the filament's interior. The ATP-DnaA-oriC complex binds and stabilizes one strand of the AT-rich DNA unwinding element (DUE), permitting loading of DNA polymerase. After initiation quickly degrades to an ADP-DnaA complex that is not apt for DNA replication. Binds acidic phospholipids. This Staphylococcus aureus (strain MRSA252) protein is Chromosomal replication initiator protein DnaA.